Here is a 195-residue protein sequence, read N- to C-terminus: AP-4-A phosphorylase (195 aa).

Basic and acidic residues predominate over residues 1–17 (MSDEDRTDRATEDHTIF). Residues 1–20 (MSDEDRTDRATEDHTIFDRG) form a disordered region. The HIT domain occupies 57-166 (PFTEIPQLSD…VPRWGGDANF (110 aa)). A Histidine triad motif motif is present at residues 151–155 (HLHVH). Residue H153 is the Tele-AMP-histidine intermediate of the active site.

In terms of assembly, homotetramer. Requires a divalent metal cation as cofactor.

The enzyme catalyses ADP + ATP + H(+) = P(1),P(4)-bis(5'-adenosyl) tetraphosphate + phosphate. In terms of biological role, catabolizes diadenosine 5',5'''-P1,P4-tetraphosphate (Ap4A) into ADP and ATP. The sequence is that of AP-4-A phosphorylase from Mycobacterium tuberculosis (strain CDC 1551 / Oshkosh).